The chain runs to 374 residues: 12-oxophytodienoate reductase 2 (374 aa).

Position 1 is an N-acetylmethionine (methionine 1). FMN contacts are provided by residues 33-35, alanine 66, and glutamine 108; that span reads PLT. Histidine 185 is a binding site for substrate. Tyrosine 190 (proton donor) is an active-site residue. Residue arginine 237 coordinates FMN. Arginine 277 contributes to the substrate binding site. FMN contacts are provided by residues 305–307 and 328–329; these read AGG and GR.

The protein belongs to the NADH:flavin oxidoreductase/NADH oxidase family. FMN serves as cofactor. In terms of tissue distribution, expressed at highest levels in roots and cotyledons, and at lower levels in leaves, shoots and flowers (sepals, petals, maturing siliques and developing pollen).

The protein localises to the cytoplasm. It catalyses the reaction (1S,2S)-OPC-8 + NADP(+) = (9S,13S,15Z)-12-oxophyto-10,15-dienoate + NADPH + H(+). It carries out the reaction a 4,5-didehydrojasmonate + NADPH + H(+) = a jasmonate + NADP(+). Its pathway is lipid metabolism; oxylipin biosynthesis. Specifically cleaves olefinic bonds in alpha,beta-unsaturated carbonyls and may be involved in detoxification or modification of these reactive compounds. May be involved in the biosynthesis or metabolism of oxylipin signaling molecules. In vitro, reduces 9R,13R-12-oxophytodienoic acid (9R,13R-OPDA) to 9R,13R-OPC-8:0, but only poorly 9S,13S-OPDA, the natural precursor of jasmonic acid (JA). Can detoxify the explosive 2,4,6-trinitrotoluene (TNT) in vitro and in vivo by catalyzing its nitroreduction to form hydroxylamino-dinitrotoluene (HADNT). Functions in an alternative and OPR3-independent pathway for JA biosynthesis. Catalyzes the NADPH-dependent reduction of 4,5-didehydrojasmonates to jasmonates. The protein is 12-oxophytodienoate reductase 2 of Arabidopsis thaliana (Mouse-ear cress).